The primary structure comprises 344 residues: N-acetyl-gamma-glutamyl-phosphate reductase (344 aa).

Cys-148 is a catalytic residue.

The protein belongs to the NAGSA dehydrogenase family. Type 1 subfamily.

It is found in the cytoplasm. It carries out the reaction N-acetyl-L-glutamate 5-semialdehyde + phosphate + NADP(+) = N-acetyl-L-glutamyl 5-phosphate + NADPH + H(+). The protein operates within amino-acid biosynthesis; L-arginine biosynthesis; N(2)-acetyl-L-ornithine from L-glutamate: step 3/4. In terms of biological role, catalyzes the NADPH-dependent reduction of N-acetyl-5-glutamyl phosphate to yield N-acetyl-L-glutamate 5-semialdehyde. The sequence is that of N-acetyl-gamma-glutamyl-phosphate reductase from Geobacillus thermodenitrificans (strain NG80-2).